A 293-amino-acid chain; its full sequence is Probable xyloglucan endotransglucosylase/hydrolase protein 5 (293 aa).

The N-terminal stretch at 1-21 (MGRLSSTLCLTFLILATVAFG) is a signal peptide. One can recognise a GH16 domain in the interval 23–220 (PPKKSINVPF…WEKAPFVASY (198 aa)). The Nucleophile role is filled by glutamate 106. The Proton donor role is filled by glutamate 110. Glutamate 110 is a binding site for xyloglucan. The N-linked (GlcNAc...) asparagine glycan is linked to asparagine 114. Residues 123–125 (QTN), 133–135 (NRE), 199–200 (DW), and glycine 204 contribute to the xyloglucan site. 2 cysteine pairs are disulfide-bonded: cysteine 228–cysteine 237 and cysteine 274–cysteine 287. Arginine 279 lines the xyloglucan pocket.

This sequence belongs to the glycosyl hydrolase 16 family. XTH group 1 subfamily. Post-translationally, contains at least one intrachain disulfide bond essential for its enzymatic activity. In terms of tissue distribution, root specific.

It localises to the secreted. It is found in the cell wall. The protein localises to the extracellular space. The protein resides in the apoplast. It carries out the reaction breaks a beta-(1-&gt;4) bond in the backbone of a xyloglucan and transfers the xyloglucanyl segment on to O-4 of the non-reducing terminal glucose residue of an acceptor, which can be a xyloglucan or an oligosaccharide of xyloglucan.. Catalyzes xyloglucan endohydrolysis (XEH) and/or endotransglycosylation (XET). Cleaves and religates xyloglucan polymers, an essential constituent of the primary cell wall, and thereby participates in cell wall construction of growing tissues. The sequence is that of Probable xyloglucan endotransglucosylase/hydrolase protein 5 (XTH5) from Arabidopsis thaliana (Mouse-ear cress).